The chain runs to 338 residues: Glycerol-3-phosphate dehydrogenase [NAD(P)+] (338 aa).

NADPH-binding residues include serine 14, tyrosine 15, histidine 35, and lysine 109. 3 residues coordinate sn-glycerol 3-phosphate: lysine 109, glycine 138, and threonine 140. Alanine 142 provides a ligand contact to NADPH. Residues lysine 194, aspartate 247, serine 257, arginine 258, and asparagine 259 each coordinate sn-glycerol 3-phosphate. Lysine 194 (proton acceptor) is an active-site residue. Arginine 258 contacts NADPH. The NADPH site is built by valine 282 and glutamate 284.

This sequence belongs to the NAD-dependent glycerol-3-phosphate dehydrogenase family.

The protein localises to the cytoplasm. The catalysed reaction is sn-glycerol 3-phosphate + NAD(+) = dihydroxyacetone phosphate + NADH + H(+). It catalyses the reaction sn-glycerol 3-phosphate + NADP(+) = dihydroxyacetone phosphate + NADPH + H(+). It participates in membrane lipid metabolism; glycerophospholipid metabolism. In terms of biological role, catalyzes the reduction of the glycolytic intermediate dihydroxyacetone phosphate (DHAP) to sn-glycerol 3-phosphate (G3P), the key precursor for phospholipid synthesis. This Shewanella frigidimarina (strain NCIMB 400) protein is Glycerol-3-phosphate dehydrogenase [NAD(P)+].